The chain runs to 471 residues: Glutamyl-tRNA(Gln) amidotransferase subunit A (471 aa).

Active-site charge relay system residues include K66 and S141. Residue S165 is the Acyl-ester intermediate of the active site.

The protein belongs to the amidase family. GatA subfamily. As to quaternary structure, heterotrimer of A, B and C subunits.

The enzyme catalyses L-glutamyl-tRNA(Gln) + L-glutamine + ATP + H2O = L-glutaminyl-tRNA(Gln) + L-glutamate + ADP + phosphate + H(+). Its function is as follows. Allows the formation of correctly charged Gln-tRNA(Gln) through the transamidation of misacylated Glu-tRNA(Gln) in organisms which lack glutaminyl-tRNA synthetase. The reaction takes place in the presence of glutamine and ATP through an activated gamma-phospho-Glu-tRNA(Gln). The sequence is that of Glutamyl-tRNA(Gln) amidotransferase subunit A from Thermus thermophilus (strain ATCC BAA-163 / DSM 7039 / HB27).